The primary structure comprises 314 residues: Ribosomal protein L11 methyltransferase (314 aa).

Positions 163, 184, 206, and 248 each coordinate S-adenosyl-L-methionine.

Belongs to the methyltransferase superfamily. PrmA family.

Its subcellular location is the cytoplasm. It carries out the reaction L-lysyl-[protein] + 3 S-adenosyl-L-methionine = N(6),N(6),N(6)-trimethyl-L-lysyl-[protein] + 3 S-adenosyl-L-homocysteine + 3 H(+). In terms of biological role, methylates ribosomal protein L11. This is Ribosomal protein L11 methyltransferase from Lactobacillus acidophilus (strain ATCC 700396 / NCK56 / N2 / NCFM).